The sequence spans 452 residues: Cobyrinate a,c-diamide synthase (452 aa).

Residues R244–W429 form the GATase cobBQ-type domain. The active-site Nucleophile is the C325.

Belongs to the CobB/CbiA family. It depends on Mg(2+) as a cofactor.

The enzyme catalyses cob(II)yrinate + 2 L-glutamine + 2 ATP + 2 H2O = cob(II)yrinate a,c diamide + 2 L-glutamate + 2 ADP + 2 phosphate + 2 H(+). The protein operates within cofactor biosynthesis; adenosylcobalamin biosynthesis; cob(II)yrinate a,c-diamide from sirohydrochlorin (anaerobic route): step 10/10. Catalyzes the ATP-dependent amidation of the two carboxylate groups at positions a and c of cobyrinate, using either L-glutamine or ammonia as the nitrogen source. This chain is Cobyrinate a,c-diamide synthase, found in Gloeobacter violaceus (strain ATCC 29082 / PCC 7421).